A 102-amino-acid chain; its full sequence is Large ribosomal subunit protein bL21 (102 aa).

Residues 80 to 91 show a composition bias toward basic residues; the sequence is KNSKRKKGHRQP. The disordered stretch occupies residues 80–102; it reads KNSKRKKGHRQPYTKLTIDKINA.

It belongs to the bacterial ribosomal protein bL21 family. In terms of assembly, part of the 50S ribosomal subunit. Contacts protein L20.

In terms of biological role, this protein binds to 23S rRNA in the presence of protein L20. The sequence is that of Large ribosomal subunit protein bL21 from Staphylococcus aureus (strain Mu3 / ATCC 700698).